A 237-amino-acid chain; its full sequence is Lectin ConGF (237 aa).

Mn(2+) is bound by residues Glu8 and Asp10. Positions 10, 12, 14, and 19 each coordinate Ca(2+). Asn14 contributes to the a carbohydrate binding site. Asp19 and His24 together coordinate Mn(2+). Positions 99, 100, 208, and 228 each coordinate a carbohydrate.

It belongs to the leguminous lectin family. Homotetramer; dimer of dimers. Concanavalin A-like lectins of the Diocleinae subtribe undergo proteolytic processing referred to as circular permutation. The propeptide is split into an N-terminal and a C-terminal part, the gamma and beta chain, respectively. These are then religated in beta-gamma order to form the mature alpha chain. The beta and gamma chains can often be detected in cell extracts. Residues 1-118 of the mature chain, as displayed here, probably constitute the beta chain in the propeptide, residues 119-237 the gamma chain.

Its function is as follows. Lectin. Induces paw edema in mice. Has a weak vasorelaxant effect on rat aorta. Has anti-inflammatory and anti-nociceptive effects. This Canavalia grandiflora (Jackbean) protein is Lectin ConGF.